The sequence spans 366 residues: Galactoside alpha-(1,2)-fucosyltransferase 1 (366 aa).

Residues 1–8 (MWPLSHRH) are Cytoplasmic-facing. A helical; Signal-anchor for type II membrane protein membrane pass occupies residues 9–25 (LCLAFLLVCVLSAISFF). Topologically, residues 26–366 (LHIHQDSIRH…LSPLWTLAEP (341 aa)) are lumenal. 3 N-linked (GlcNAc...) asparagine glycosylation sites follow: Asn-66, Asn-302, and Asn-328.

Belongs to the glycosyltransferase 11 family.

It is found in the golgi apparatus. The protein resides in the golgi stack membrane. It catalyses the reaction a beta-D-galactosyl-(1-&gt;4)-N-acetyl-beta-D-glucosaminyl derivative + GDP-beta-L-fucose = an alpha-L-Fuc-(1-&gt;2)-beta-D-Gal-(1-&gt;4)-beta-D-GlcNAc derivative + GDP + H(+). It carries out the reaction a ganglioside GA1 + GDP-beta-L-fucose = a ganglioside Fuc-GA1 + GDP + H(+). The catalysed reaction is a beta-D-Gal-(1-&gt;3)-beta-D-GlcNAc-(1-&gt;3)-beta-D-Gal-(1-&gt;4)-beta-D-Glc-(1&lt;-&gt;1')-Cer(d18:1(4E)) + GDP-beta-L-fucose = alpha-L-fucosyl-(1-&gt;2)- beta-D-galactosyl-(1-&gt;3)-N-acetyl-beta-D-glucosaminyl-(1-&gt;3)-beta-D-galactosyl-(1-&gt;4)-beta-D-glucosyl-(1&lt;-&gt;1')-N-acylsphing-4-enine + GDP + H(+). The enzyme catalyses a neolactoside nLc4Cer(d18:1(4E)) + GDP-beta-L-fucose = a neolactoside IV(2)-alpha-Fuc-nLc4Cer(d18:1(4E)) + GDP + H(+). It catalyses the reaction a ganglioside GM1 + GDP-beta-L-fucose = a ganglioside Fuc-GM1 + GDP + H(+). It carries out the reaction beta-D-galactosyl-(1-&gt;3)-N-acetyl-D-galactosamine + GDP-beta-L-fucose = alpha-L-fucosyl-(1-&gt;2)-beta-D-galactosyl-(1-&gt;3)-N-acetyl-D-galactosamine + GDP + H(+). It participates in protein modification; protein glycosylation. Catalyzes the transfer of L-fucose, from a guanosine diphosphate-beta-L-fucose, to the terminal galactose residue of glycoconjugates through an alpha(1,2) linkage leading to H antigen synthesis that is an intermediate substrate in the synthesis of ABO blood group antigens. H antigen is essential for maturation of the glomerular layer of the main olfactory bulb, in cell migration and early cell-cell contacts during tumor associated angiogenesis. Preferentially fucosylates soluble lactose and to a lesser extent fucosylates glycolipids gangliosides GA1 and GM1a. The sequence is that of Galactoside alpha-(1,2)-fucosyltransferase 1 from Aotus nancymaae (Ma's night monkey).